The following is a 1342-amino-acid chain: DNA-directed RNA polymerase subunit beta (1342 aa).

This sequence belongs to the RNA polymerase beta chain family. The RNAP catalytic core consists of 2 alpha, 1 beta, 1 beta' and 1 omega subunit. When a sigma factor is associated with the core the holoenzyme is formed, which can initiate transcription.

It carries out the reaction RNA(n) + a ribonucleoside 5'-triphosphate = RNA(n+1) + diphosphate. Its function is as follows. DNA-dependent RNA polymerase catalyzes the transcription of DNA into RNA using the four ribonucleoside triphosphates as substrates. The polypeptide is DNA-directed RNA polymerase subunit beta (Salmonella typhi).